Consider the following 687-residue polypeptide: Transketolase 2 (687 aa).

His47 is a binding site for substrate. Thiamine diphosphate is bound by residues His87 and 135 to 137 (GPL). Asp176 contributes to the Mg(2+) binding site. The thiamine diphosphate site is built by Gly177 and Asn206. 2 residues coordinate Mg(2+): Asn206 and Ile208. Positions 282, 379, and 406 each coordinate substrate. His282 is a thiamine diphosphate binding site. Glu432 serves as the catalytic Proton donor. Phe458 provides a ligand contact to thiamine diphosphate. Substrate-binding residues include His482, Asp490, His494, and Arg541.

The protein belongs to the transketolase family. It depends on Mg(2+) as a cofactor. Thiamine diphosphate serves as cofactor.

The enzyme catalyses D-sedoheptulose 7-phosphate + D-glyceraldehyde 3-phosphate = aldehydo-D-ribose 5-phosphate + D-xylulose 5-phosphate. Its activity is regulated as follows. Activity is increased sixfold following autotrophic growth on methanol compared with that of heterotrophically grown cells. Its function is as follows. Catalyzes the transfer of a two-carbon ketol group from a ketose donor to an aldose acceptor, via a covalent intermediate with the cofactor thiamine pyrophosphate. The chain is Transketolase 2 from Xanthobacter flavus.